The following is a 131-amino-acid chain: Small ribosomal subunit protein uS8 (131 aa).

Belongs to the universal ribosomal protein uS8 family. In terms of assembly, part of the 30S ribosomal subunit. Contacts proteins S5 and S12.

One of the primary rRNA binding proteins, it binds directly to 16S rRNA central domain where it helps coordinate assembly of the platform of the 30S subunit. The sequence is that of Small ribosomal subunit protein uS8 from Nitrosomonas eutropha (strain DSM 101675 / C91 / Nm57).